The primary structure comprises 950 residues: Glycine dehydrogenase (decarboxylating) 1 (950 aa).

The residue at position 704 (Lys-704) is an N6-(pyridoxal phosphate)lysine.

Belongs to the GcvP family. As to quaternary structure, the glycine cleavage system is composed of four proteins: P, T, L and H. The cofactor is pyridoxal 5'-phosphate.

It carries out the reaction N(6)-[(R)-lipoyl]-L-lysyl-[glycine-cleavage complex H protein] + glycine + H(+) = N(6)-[(R)-S(8)-aminomethyldihydrolipoyl]-L-lysyl-[glycine-cleavage complex H protein] + CO2. The glycine cleavage system catalyzes the degradation of glycine. The P protein binds the alpha-amino group of glycine through its pyridoxal phosphate cofactor; CO(2) is released and the remaining methylamine moiety is then transferred to the lipoamide cofactor of the H protein. The protein is Glycine dehydrogenase (decarboxylating) 1 of Pseudomonas fluorescens (strain Pf0-1).